Here is a 63-residue protein sequence, read N- to C-terminus: Alpha-conotoxin-like Sm1.3 (63 aa).

An N-terminal signal peptide occupies residues 1-16 (MFTVFLLVVLATTVVS). Positions 17 to 43 (SPSDRASDGRNAAANEKASDVIALALK) are excised as a propeptide. 2 disulfide bridges follow: C45–C51 and C46–C59. M58 carries the methionine sulfoxide; partial modification. C59 carries the post-translational modification Cysteine amide; partial.

This sequence belongs to the conotoxin A superfamily. Expressed by the venom duct.

The protein resides in the secreted. In terms of biological role, alpha-conotoxins act on postsynaptic membranes, they bind to the nicotinic acetylcholine receptors (nAChR) and thus inhibit them. This Conus stercusmuscarum (Fly-specked cone) protein is Alpha-conotoxin-like Sm1.3.